We begin with the raw amino-acid sequence, 492 residues long: Glutamyl-tRNA(Gln) amidotransferase subunit A (492 aa).

Active-site charge relay system residues include K84 and S159. Residue S183 is the Acyl-ester intermediate of the active site.

The protein belongs to the amidase family. GatA subfamily. As to quaternary structure, heterotrimer of A, B and C subunits.

It carries out the reaction L-glutamyl-tRNA(Gln) + L-glutamine + ATP + H2O = L-glutaminyl-tRNA(Gln) + L-glutamate + ADP + phosphate + H(+). In terms of biological role, allows the formation of correctly charged Gln-tRNA(Gln) through the transamidation of misacylated Glu-tRNA(Gln) in organisms which lack glutaminyl-tRNA synthetase. The reaction takes place in the presence of glutamine and ATP through an activated gamma-phospho-Glu-tRNA(Gln). The chain is Glutamyl-tRNA(Gln) amidotransferase subunit A from Anaeromyxobacter dehalogenans (strain 2CP-C).